A 180-amino-acid chain; its full sequence is Large ribosomal subunit protein uL5 (180 aa).

The protein belongs to the universal ribosomal protein uL5 family. As to quaternary structure, part of the 50S ribosomal subunit; part of the 5S rRNA/L5/L18/L25 subcomplex. Contacts the 5S rRNA and the P site tRNA. Forms a bridge to the 30S subunit in the 70S ribosome.

This is one of the proteins that bind and probably mediate the attachment of the 5S RNA into the large ribosomal subunit, where it forms part of the central protuberance. In the 70S ribosome it contacts protein S13 of the 30S subunit (bridge B1b), connecting the 2 subunits; this bridge is implicated in subunit movement. Contacts the P site tRNA; the 5S rRNA and some of its associated proteins might help stabilize positioning of ribosome-bound tRNAs. This chain is Large ribosomal subunit protein uL5, found in Spiroplasma kunkelii.